Consider the following 355-residue polypeptide: Peptide chain release factor 1 (355 aa).

Gln230 carries the N5-methylglutamine modification.

It belongs to the prokaryotic/mitochondrial release factor family. Post-translationally, methylated by PrmC. Methylation increases the termination efficiency of RF1.

The protein localises to the cytoplasm. Its function is as follows. Peptide chain release factor 1 directs the termination of translation in response to the peptide chain termination codons UAG and UAA. This chain is Peptide chain release factor 1, found in Geobacter metallireducens (strain ATCC 53774 / DSM 7210 / GS-15).